The primary structure comprises 492 residues: Osmoregulated proline transporter OpuE (492 aa).

A run of 13 helical transmembrane segments spans residues isoleucine 3 to alanine 23, leucine 40 to methionine 60, valine 62 to isoleucine 82, isoleucine 125 to serine 145, glycine 161 to valine 181, alanine 190 to valine 210, leucine 224 to leucine 244, isoleucine 271 to valine 291, isoleucine 314 to serine 334, leucine 365 to leucine 385, leucine 394 to leucine 414, alanine 424 to alanine 444, and valine 449 to isoleucine 469.

Belongs to the sodium:solute symporter (SSF) (TC 2.A.21) family.

It is found in the cell membrane. It catalyses the reaction L-proline(in) + Na(+)(in) = L-proline(out) + Na(+)(out). Functionally, catalyzes the uptake of extracellular proline under high-osmolarity growth conditions. Essential for the use of proline present in the environment as an osmoprotectant. This Bacillus subtilis (strain 168) protein is Osmoregulated proline transporter OpuE.